The chain runs to 206 residues: CASP-like protein 4B2 (206 aa).

2 stretches are compositionally biased toward low complexity: residues 1-12 (MAMVPADADAAA) and 24-36 (SSQNGAPNSAAAA). The segment at 1–42 (MAMVPADADAAAKPPPDVEKPDYSSQNGAPNSAAAAAGGGGG) is disordered. Over 1–60 (MAMVPADADAAAKPPPDVEKPDYSSQNGAPNSAAAAAGGGGGGVVDSVVARWRREDMLDK) the chain is Cytoplasmic. Residues 61-81 (SPLALHAAAAAFAFVALVLVA) form a helical membrane-spanning segment. Residues 82–99 (SNQHGDWMEFDRYQEYRY) lie on the Extracellular side of the membrane. The chain crosses the membrane as a helical span at residues 100–120 (LLAIAALAFAYSLAQALRHAL). Residues 121-138 (RMRRGVDPVPTASGRLLD) lie on the Cytoplasmic side of the membrane. The chain crosses the membrane as a helical span at residues 139–159 (FASDQVVAYLLMSALSAATPI). Topologically, residues 160–174 (TNRMRSAVINRFTDT) are extracellular. The chain crosses the membrane as a helical span at residues 175 to 195 (TAAAISMAFLAFVSLALSAIV). The Cytoplasmic portion of the chain corresponds to 196–206 (SGYKLSKQTYM).

It belongs to the Casparian strip membrane proteins (CASP) family. In terms of assembly, homodimer and heterodimers.

It localises to the cell membrane. The sequence is that of CASP-like protein 4B2 from Oryza sativa subsp. japonica (Rice).